The following is a 305-amino-acid chain: UDP-3-O-acyl-N-acetylglucosamine deacetylase (305 aa).

Residues histidine 79, histidine 238, and aspartate 242 each coordinate Zn(2+). Histidine 265 serves as the catalytic Proton donor.

This sequence belongs to the LpxC family. Requires Zn(2+) as cofactor.

It carries out the reaction a UDP-3-O-[(3R)-3-hydroxyacyl]-N-acetyl-alpha-D-glucosamine + H2O = a UDP-3-O-[(3R)-3-hydroxyacyl]-alpha-D-glucosamine + acetate. Its pathway is glycolipid biosynthesis; lipid IV(A) biosynthesis; lipid IV(A) from (3R)-3-hydroxytetradecanoyl-[acyl-carrier-protein] and UDP-N-acetyl-alpha-D-glucosamine: step 2/6. In terms of biological role, catalyzes the hydrolysis of UDP-3-O-myristoyl-N-acetylglucosamine to form UDP-3-O-myristoylglucosamine and acetate, the committed step in lipid A biosynthesis. This Salmonella arizonae (strain ATCC BAA-731 / CDC346-86 / RSK2980) protein is UDP-3-O-acyl-N-acetylglucosamine deacetylase.